A 239-amino-acid polypeptide reads, in one-letter code: MIFPAIDLRAGQSVRLYQGDFKQATLINPDPVVQAQQINAAGLQQLHMVDLDGAKSGRPENFATITAIRQAFTGTIELGGGIRTYELATRYLELGIDRLILGSVALTDPRLVKRLLSEFGGERIVIGLDGTNGYVAIKGWLEQSQTKMSTLMKTMTTSGAKHFIVTDVARDGTMQGPNLALYQELQAQVPTANLIASGGVRNLTDVQVLQASGFKDVIIGKALAEGGVTLAELAGVTEC.

Asp-7 serves as the catalytic Proton acceptor. Residue Asp-129 is the Proton donor of the active site.

It belongs to the HisA/HisF family.

It localises to the cytoplasm. It catalyses the reaction 1-(5-phospho-beta-D-ribosyl)-5-[(5-phospho-beta-D-ribosylamino)methylideneamino]imidazole-4-carboxamide = 5-[(5-phospho-1-deoxy-D-ribulos-1-ylimino)methylamino]-1-(5-phospho-beta-D-ribosyl)imidazole-4-carboxamide. It functions in the pathway amino-acid biosynthesis; L-histidine biosynthesis; L-histidine from 5-phospho-alpha-D-ribose 1-diphosphate: step 4/9. This Lactiplantibacillus plantarum (strain ATCC BAA-793 / NCIMB 8826 / WCFS1) (Lactobacillus plantarum) protein is 1-(5-phosphoribosyl)-5-[(5-phosphoribosylamino)methylideneamino] imidazole-4-carboxamide isomerase.